The primary structure comprises 199 residues: Inner membrane-spanning protein YciB (199 aa).

5 consecutive transmembrane segments (helical) span residues 3 to 23, 47 to 67, 76 to 96, 119 to 139, and 149 to 169; these read LLID…WGIY, VEPM…ATLL, WKPS…QLVF, LNWS…VIAY, and FKLF…AIYM. The tract at residues 180-199 is disordered; sequence AAAATPDALPPPGVQQDKQP.

Belongs to the YciB family.

The protein localises to the cell inner membrane. Plays a role in cell envelope biogenesis, maintenance of cell envelope integrity and membrane homeostasis. This is Inner membrane-spanning protein YciB from Delftia acidovorans (strain DSM 14801 / SPH-1).